Here is a 232-residue protein sequence, read N- to C-terminus: ATP-dependent dethiobiotin synthetase BioD (232 aa).

16–21 (GVGKTV) contacts ATP. Thr20 provides a ligand contact to Mg(2+). The active site involves Lys41. Thr45 provides a ligand contact to substrate. Residues Asp52, 111 to 114 (EGIG), 171 to 172 (NQ), 200 to 202 (PLS), and Glu207 each bind ATP. Mg(2+) is bound by residues Asp52 and Glu111.

This sequence belongs to the dethiobiotin synthetase family. As to quaternary structure, homodimer. Requires Mg(2+) as cofactor.

Its subcellular location is the cytoplasm. It catalyses the reaction (7R,8S)-7,8-diammoniononanoate + CO2 + ATP = (4R,5S)-dethiobiotin + ADP + phosphate + 3 H(+). It carries out the reaction (7R,8S)-8-amino-7-(carboxyamino)nonanoate + ATP = (4R,5S)-dethiobiotin + ADP + phosphate + H(+). Its pathway is cofactor biosynthesis; biotin biosynthesis; biotin from 7,8-diaminononanoate: step 1/2. Its function is as follows. Catalyzes a mechanistically unusual reaction, the ATP-dependent insertion of CO2 between the N7 and N8 nitrogen atoms of 7,8-diaminopelargonic acid (DAPA, also called 7,8-diammoniononanoate) to form a ureido ring. This archaea does not encode bioA (which catalyzes the formation of the precursor for this reaction in the cannonical pathway), instead it encodes bioU, which replaces bioA and also performs the first half of the cannonical BioD reaction. Thus in this archaea BioD has a different substrate. The polypeptide is ATP-dependent dethiobiotin synthetase BioD (Haloferax mediterranei (strain ATCC 33500 / DSM 1411 / JCM 8866 / NBRC 14739 / NCIMB 2177 / R-4) (Halobacterium mediterranei)).